An 816-amino-acid polypeptide reads, in one-letter code: Phosphatidylinositol 4-kinase beta (816 aa).

3 disordered regions span residues methionine 1 to leucine 30, glutamate 101 to arginine 120, and alanine 248 to serine 318. Glycine 2 carries the N-acetylglycine modification. The tract at residues glycine 2–isoleucine 68 is interaction with ACBD3. Residues leucine 29–serine 242 form the PIK helical domain. Residue serine 258 is modified to Phosphoserine. Threonine 263 bears the Phosphothreonine mark. Residues serine 266, serine 275, serine 277, serine 284, and serine 294 each carry the phosphoserine modification. Polar residues-rich tracts occupy residues aspartate 278–lysine 297 and serine 306–serine 318. Serine 428 carries the phosphoserine modification. Phosphothreonine is present on threonine 438. Serine 511 is subject to Phosphoserine. Phosphothreonine occurs at positions 517 and 519. The region spanning glutamate 535–threonine 801 is the PI3K/PI4K catalytic domain. The interval valine 541–glycine 547 is G-loop. A catalytic loop region spans residues glutamine 668–asparagine 676. Residues histidine 687–threonine 711 form an activation loop region.

This sequence belongs to the PI3/PI4-kinase family. Type III PI4K subfamily. Interacts with ARF1 and ARF3 in the Golgi complex, but not with ARF4, ARF5 or ARF6. Interacts with NCS1/FREQ in a calcium-independent manner. Interacts with CALN1/CABP8 and CALN2/CABP7; in a calcium-dependent manner; this interaction competes with NCS1/FREQ binding. Interacts with ACBD3. Interacts with ARMH3, YWHAB, YWHAE, YWHAG, YWHAH, YWHAQ, YWHAZ and SFN. Interacts with GGA2 (via VHS domain); the interaction is important for PI4KB location at the Golgi apparatus membrane. Interacts with ATG9A. The cofactor is Mg(2+). Mn(2+) serves as cofactor.

The protein resides in the endomembrane system. The protein localises to the mitochondrion outer membrane. It localises to the rough endoplasmic reticulum membrane. Its subcellular location is the golgi apparatus. It is found in the golgi apparatus membrane. The enzyme catalyses a 1,2-diacyl-sn-glycero-3-phospho-(1D-myo-inositol) + ATP = a 1,2-diacyl-sn-glycero-3-phospho-(1D-myo-inositol 4-phosphate) + ADP + H(+). Inhibited by wortmannin. Increased kinase activity upon interaction with NCS1/FREQ. Phosphorylates phosphatidylinositol (PI) in the first committed step in the production of the second messenger inositol-1,4,5,-trisphosphate (PIP). May regulate Golgi disintegration/reorganization during mitosis, possibly via its phosphorylation. Involved in Golgi-to-plasma membrane trafficking. This chain is Phosphatidylinositol 4-kinase beta (PI4KB), found in Bos taurus (Bovine).